The chain runs to 362 residues: Sulfate/thiosulfate import ATP-binding protein CysA (362 aa).

The 235-residue stretch at 3–237 folds into the ABC transporter domain; it reads IEIHDLSKQF…PANPFVYEFL (235 aa). Residue 35 to 42 coordinates ATP; sequence GPSGSGKT.

The protein belongs to the ABC transporter superfamily. Sulfate/tungstate importer (TC 3.A.1.6) family. In terms of assembly, the complex is composed of two ATP-binding proteins (CysA), two transmembrane proteins (CysT and CysW) and a solute-binding protein (CysP).

The protein resides in the cell inner membrane. It catalyses the reaction sulfate(out) + ATP + H2O = sulfate(in) + ADP + phosphate + H(+). The catalysed reaction is thiosulfate(out) + ATP + H2O = thiosulfate(in) + ADP + phosphate + H(+). Functionally, part of the ABC transporter complex CysAWTP involved in sulfate/thiosulfate import. Responsible for energy coupling to the transport system. The sequence is that of Sulfate/thiosulfate import ATP-binding protein CysA from Nitrosomonas europaea (strain ATCC 19718 / CIP 103999 / KCTC 2705 / NBRC 14298).